A 570-amino-acid polypeptide reads, in one-letter code: NADPH oxidase 2 (570 aa).

At 2–9 (GNWAVNEG) the chain is on the cytoplasmic side. A helical transmembrane segment spans residues 10–36 (LSIFVILVWLGLNVFLFVWYYRVYDIP). The Extracellular portion of the chain corresponds to 37–46 (PKFFYTRKLL). A helical membrane pass occupies residues 47–72 (GSALALARAPAACLNFNCMLILLPVC). Residues 54–286 (RAPAACLNFN…MFLYLCERLV (233 aa)) form the Ferric oxidoreductase domain. Over 73 to 95 (RNLLSFLRGSSACCSTRVRRQLD) the chain is Cytoplasmic. Residues 96-130 (RNLTFHKMVAWMIALHSAIHTIAHLFNVEWCVNAR) form a helical membrane-spanning segment. Histidine 101 and histidine 115 together coordinate heme b. The Extracellular portion of the chain corresponds to 131 to 163 (VNNSDPYSVALSELGDRQNESYLNFARKRIKNP). Residues asparagine 132 and asparagine 149 are each glycosylated (N-linked (GlcNAc...) asparagine). Lysine 161 is covalently cross-linked (Glycyl lysine isopeptide (Lys-Gly) (interchain with G-Cter in ubiquitin)). The helical transmembrane segment at 164 to 194 (EGGLYLAVTLLAGITGVVITLCLILIITSST) threads the bilayer. The Cytoplasmic portion of the chain corresponds to 195 to 203 (KTIRRSYFE). FAD is bound by residues arginine 199 and serine 200. A helical membrane pass occupies residues 204-222 (VFWYTHHLFVIFFIGLAIH). Positions 206, 209, 222, 226, and 227 each coordinate heme b. Topologically, residues 223–267 (GAERIVRGQTAESLAVHNITVCEQKISEWGKIKECPIPQFAGNPP) are extracellular. Residue asparagine 240 is glycosylated (N-linked (GlcNAc...) asparagine). Lysine 255 participates in a covalent cross-link: Glycyl lysine isopeptide (Lys-Gly) (interchain with G-Cter in ubiquitin). Residues methionine 268, tyrosine 280, and arginine 287 each contribute to the heme b site. A helical transmembrane segment spans residues 268–285 (MTWKWIVGPMFLYLCERL). At 286–570 (VRFWRSQQKV…VHFIFNKENF (285 aa)) the chain is on the cytoplasmic side. Residues 287–397 (RFWRSQQKVV…DGPFGTASED (111 aa)) form the FAD-binding FR-type domain. Residues lysine 294, lysine 299, lysine 306, lysine 328, and lysine 334 each participate in a glycyl lysine isopeptide (Lys-Gly) (interchain with G-Cter in ubiquitin) cross-link. Positions 337, 338, 339, 341, 354, 356, 361, and 362 each coordinate FAD. Residue lysine 381 forms a Glycyl lysine isopeptide (Lys-Gly) (interchain with G-Cter in ubiquitin) linkage. NADPH is bound by residues isoleucine 411, arginine 446, and threonine 481. Lysine 506 participates in a covalent cross-link: Glycyl lysine isopeptide (Lys-Gly) (interchain with G-Cter in ubiquitin). Arginine 513 serves as a coordination point for NADPH. Residue lysine 567 forms a Glycyl lysine isopeptide (Lys-Gly) (interchain with G-Cter in ubiquitin) linkage.

Component of the phagocyte NADPH oxidase core complex/cytochrome b558 complex, composed of CYBB (heavy chain (beta)) and CYBA (light chain (alpha)). Component of the phagocyte NADPH oxidase complex composed of an obligatory core heterodimer formed by the membrane proteins CYBA and CYBB and the cytosolic regulatory subunits NCF1/p47-phox, NCF2/p67-phox, NCF4/p40-phox and the small GTPase RAC1 or RAC2. Interacts with NCF1 (phosphorylated form). Interacts with NCF2; the interaction is enhanced in the presence of GBP7. Interacts with RAC2. Interacts with RAC1. Interacts with calprotectin (S100A8/9). Interacts with NRROS; the interaction is direct and impairs formation of a stable NADPH oxidase complex. Interacts with CYBC1; CYBC1 may act as a chaperone stabilizing Cytochrome b-245 heterodimer. The CYBA-CYBB complex interacts with GBP7. Requires FAD as cofactor. Glycosylated. In terms of processing, phosphorylated on Ser and Thr residues by PKC during neutrophils activation. Phosphorylation enhances the NADPH oxidase activity and stimulates its interaction with RAC2, NCF2/p67-phox, and NCF1/p47-phox. Post-translationally, undergoes 'Lys-48'-linked polyubiquitination, likely by RNF145, triggering endoplasmic reticulum-associated degradation. Detected in neutrophils (at protein level).

Its subcellular location is the cell membrane. The enzyme catalyses NADPH + 2 O2 = 2 superoxide + NADP(+) + H(+). Functionally, catalytic subunit of the phagocyte NADPH oxidase complex that mediates the transfer of electrons from cytosolic NADPH to O2 to produce the superoxide anion (O2(-)). In the activated complex, electrons are first transferred from NADPH to flavin adenine dinucleotide (FAD) and subsequently transferred via two heme molecules to molecular oxygen, producing superoxide through an outer-sphere reaction. Activation of the NADPH oxidase complex is initiated by the assembly of cytosolic subunits of the NADPH oxidase complex with the core NADPH oxidase complex to form a complex at the plasma membrane or phagosomal membrane. This activation process is initiated by phosphorylation dependent binding of the cytosolic NCF1/p47-phox subunit to the C-terminus of CYBA/p22-phox. NADPH oxidase complex assembly is impaired through interaction with NRROS. In Homo sapiens (Human), this protein is NADPH oxidase 2.